Consider the following 333-residue polypeptide: Fructose-1,6-bisphosphatase class 1 (333 aa).

4 residues coordinate Mg(2+): E92, D113, L115, and D116. Substrate-binding positions include D116 to S119, N209, Y242, and K272. Position 278 (E278) interacts with Mg(2+).

It belongs to the FBPase class 1 family. Homotetramer. Mg(2+) is required as a cofactor.

Its subcellular location is the cytoplasm. The catalysed reaction is beta-D-fructose 1,6-bisphosphate + H2O = beta-D-fructose 6-phosphate + phosphate. The protein operates within carbohydrate biosynthesis; Calvin cycle. The protein is Fructose-1,6-bisphosphatase class 1 of Chlorobium chlorochromatii (strain CaD3).